Consider the following 352-residue polypeptide: tRNA-specific 2-thiouridylase MnmA (352 aa).

Residues 7 to 14 (GLSGGVDS) and Leu33 each bind ATP. Cys94 acts as the Nucleophile in catalysis. Cys94 and Cys193 are disulfide-bonded. Gly119 contributes to the ATP binding site. The segment at 143–145 (KDQ) is interaction with tRNA. Residue Cys193 is the Cysteine persulfide intermediate of the active site. The interaction with tRNA stretch occupies residues 298–299 (RY).

This sequence belongs to the MnmA/TRMU family.

It is found in the cytoplasm. The enzyme catalyses S-sulfanyl-L-cysteinyl-[protein] + uridine(34) in tRNA + AH2 + ATP = 2-thiouridine(34) in tRNA + L-cysteinyl-[protein] + A + AMP + diphosphate + H(+). Functionally, catalyzes the 2-thiolation of uridine at the wobble position (U34) of tRNA, leading to the formation of s(2)U34. The polypeptide is tRNA-specific 2-thiouridylase MnmA (Nostoc sp. (strain PCC 7120 / SAG 25.82 / UTEX 2576)).